The chain runs to 499 residues: Glycerol kinase (499 aa).

An ADP-binding site is contributed by Thr13. The ATP site is built by Thr13, Thr14, and Ser15. Thr13 contacts sn-glycerol 3-phosphate. Arg17 contacts ADP. Sn-glycerol 3-phosphate-binding residues include Arg83, Glu84, Tyr135, and Asp245. Glycerol contacts are provided by Arg83, Glu84, Tyr135, Asp245, and Gln246. Positions 267 and 310 each coordinate ADP. Positions 267, 310, 314, and 411 each coordinate ATP. Residues Ala411 and Asn415 each contribute to the ADP site.

Belongs to the FGGY kinase family.

It carries out the reaction glycerol + ATP = sn-glycerol 3-phosphate + ADP + H(+). It participates in polyol metabolism; glycerol degradation via glycerol kinase pathway; sn-glycerol 3-phosphate from glycerol: step 1/1. Inhibited by fructose 1,6-bisphosphate (FBP). In terms of biological role, key enzyme in the regulation of glycerol uptake and metabolism. Catalyzes the phosphorylation of glycerol to yield sn-glycerol 3-phosphate. In Xylella fastidiosa (strain 9a5c), this protein is Glycerol kinase.